The primary structure comprises 100 residues: Chorion class A protein M2774 (100 aa).

A left arm region spans residues 1–33 (GGGWNGWNGLGGGWNGLGVGWSRLDGGYGGGCG). Residues 34–81 (SYGGEGIGNVGVADELPVGGVTAVGGRVPIIGGVEYGGPARAAGAVSI) form a central domain region. Residues 82–100 (CGHCAPTCGCGRAGLGGYY) form a right arm region.

The protein belongs to the chorion protein family.

In terms of biological role, this protein is one of many from the eggshell of the silk moth. This is Chorion class A protein M2774 from Bombyx mori (Silk moth).